The following is a 436-amino-acid chain: RNA polymerase sigma-54 factor (436 aa).

Residues 324-343 (TLREVADCLSLHESTVSRAI) constitute a DNA-binding region (H-T-H motif). The RPON box signature appears at 413-421 (SRRTVAKYR).

The protein belongs to the sigma-54 factor family. As to quaternary structure, interacts transiently with the RNAP core.

Functionally, sigma factors are initiation factors that promote the attachment of RNA polymerase (RNAP) to specific initiation sites and are then released. This sigma factor is responsible for the expression of the levanase operon. The open complex (sigma-54 and core RNA polymerase) serves as the receptor for receipt of the melting signal from the remotely bound activator protein LevR for the expression of the levanase operon. Associates with the RNAP core only in stationary phase cells. The polypeptide is RNA polymerase sigma-54 factor (sigL) (Bacillus subtilis (strain 168)).